The primary structure comprises 530 residues: Pentatricopeptide repeat-containing protein At3g51320 (530 aa).

10 PPR repeats span residues K82–P116, D117–Q151, V152–R182, D183–S217, W218–G248, N249–S283, S284–R314, N315–P349, D350–E380, and N386–P420. A type E motif region spans residues K424–K499.

Belongs to the PPR family. PCMP-E subfamily.

This Arabidopsis thaliana (Mouse-ear cress) protein is Pentatricopeptide repeat-containing protein At3g51320.